A 382-amino-acid chain; its full sequence is POU domain, class 3, transcription factor 2-A (382 aa).

Disordered regions lie at residues 69-136 (PWAT…SSNG), 150-206 (GMIN…TPTS), and 348-382 (EKRM…TSVQ). The span at 122-136 (STGSTHLSSMASSNG) shows a compositional bias: polar residues. The segment covering 165–178 (LRDSHDDHHGDHGH) has biased composition (basic and acidic residues). Positions 179–194 (QQVSQAQQQHSQLQGG) are enriched in low complexity. Positions 201–275 (EDTPTSDDLE…LLNKWLEEAD (75 aa)) constitute a POU-specific domain. The homeobox DNA-binding region spans 293-352 (KRKKRTSIEVSVKGALESHFLKCPKPSAPEITSLADSLQLEKEVVRVWFCNRRQKEKRMT).

The protein belongs to the POU transcription factor family. Class-3 subfamily. Expressed in the developing brain and spinal cord. Also found in a restricted region of the auditory vesicle during development. In the adult, expression is restricted to the brain.

It localises to the nucleus. Transcription factor that may be implicated in patterning of the central nervous system during early development. This is POU domain, class 3, transcription factor 2-A (pou3f2-a) from Xenopus laevis (African clawed frog).